Reading from the N-terminus, the 665-residue chain is ELMO family protein LMO1 (665 aa).

Forms an active heterodimer with DCK1.

The protein resides in the cytoplasm. It localises to the mitochondrion. Functionally, forms a transiant heterodimeric complex with DCK1, that acts as a guanine nucleotide exchange factor (GEF) for the small GTPase RHO5. DCK1, LMO1 and RHO5 relocate to mitochondria upon oxidative stress and trigger cell death. The DCK1/LMO1/RHO5 signaling module mediates mitochondrial turnover under nitrogen starvation conditions via mitophagy. The DCK1/LMO1/RHO5 signaling module also plays a role in cell wall integrity signaling. The sequence is that of ELMO family protein LMO1 from Saccharomyces cerevisiae (strain ATCC 204508 / S288c) (Baker's yeast).